The sequence spans 963 residues: Integrator complex subunit 4 (963 aa).

K26 carries the N6-acetyllysine modification. HEAT repeat units lie at residues 66–105 (AESVEGVVRILLEHYYKENDPSVRLKIASLLGLLSKTAGF), 145–183 (QAIQMRLVDVACKHLTDTSHGVRNKCLQLLGNLGSLEKS), 190–228 (GLAARDVQKIIGDYFSDQDPRVRTAAIKAMLQLHERGLK), 229–263 (LHQTIYNQACKLLSDDYEQVRSAAVQLIWVVSQLY), 277–313 (IRLVDDAFGKICHMVSDGSWVVRVQAAKLLGSMEQVS), 369–405 (NLIESGACGAFVHGLEDEMYEVRIAAVEALCMLAQSS), 406–444 (PSFAEKCLDFLVDMFNDEIEEVRLQSIHTMRKISNNITL), and 446–484 (EDQLDTVLAVLEDSSRDIREALHELLCCTNVSTKEGIHL). K791 is covalently cross-linked (Glycyl lysine isopeptide (Lys-Gly) (interchain with G-Cter in SUMO1); alternate). Residue K791 forms a Glycyl lysine isopeptide (Lys-Gly) (interchain with G-Cter in SUMO2); alternate linkage.

The protein belongs to the Integrator subunit 4 family. As to quaternary structure, component of the Integrator complex, composed of core subunits INTS1, INTS2, INTS3, INTS4, INTS5, INTS6, INTS7, INTS8, INTS9/RC74, INTS10, INTS11/CPSF3L, INTS12, INTS13, INTS14 and INTS15. The core complex associates with protein phosphatase 2A subunits PPP2CA and PPP2R1A, to form the Integrator-PP2A (INTAC) complex. INTS4 is part of the RNA endonuclease subcomplex, composed of INTS4, INTS9, INTS11 and inositol hexakisphosphate (InsP6). Interacts with BRAT1; interaction is required for the assembly of the RNA endonuclease subcomplex.

It is found in the nucleus. The protein resides in the cytoplasm. Functionally, component of the integrator complex, a multiprotein complex that terminates RNA polymerase II (Pol II) transcription in the promoter-proximal region of genes. The integrator complex provides a quality checkpoint during transcription elongation by driving premature transcription termination of transcripts that are unfavorably configured for transcriptional elongation: the complex terminates transcription by (1) catalyzing dephosphorylation of the C-terminal domain (CTD) of Pol II subunit POLR2A/RPB1 and SUPT5H/SPT5, (2) degrading the exiting nascent RNA transcript via endonuclease activity and (3) promoting the release of Pol II from bound DNA. The integrator complex is also involved in terminating the synthesis of non-coding Pol II transcripts, such as enhancer RNAs (eRNAs), small nuclear RNAs (snRNAs), telomerase RNAs and long non-coding RNAs (lncRNAs). Within the integrator complex, INTS4 acts as an scaffold that links INTS9 and INTS11. Mediates recruitment of cytoplasmic dynein to the nuclear envelope, probably as component of the integrator complex. This Homo sapiens (Human) protein is Integrator complex subunit 4.